Reading from the N-terminus, the 342-residue chain is tRNA N6-adenosine threonylcarbamoyltransferase (342 aa).

Residues histidine 111 and histidine 115 each coordinate Fe cation. Residues 134–138 (LVSGG), aspartate 167, glycine 180, and asparagine 272 contribute to the substrate site. Aspartate 300 is a binding site for Fe cation.

Belongs to the KAE1 / TsaD family. Fe(2+) serves as cofactor.

It is found in the cytoplasm. The catalysed reaction is L-threonylcarbamoyladenylate + adenosine(37) in tRNA = N(6)-L-threonylcarbamoyladenosine(37) in tRNA + AMP + H(+). In terms of biological role, required for the formation of a threonylcarbamoyl group on adenosine at position 37 (t(6)A37) in tRNAs that read codons beginning with adenine. Is involved in the transfer of the threonylcarbamoyl moiety of threonylcarbamoyl-AMP (TC-AMP) to the N6 group of A37, together with TsaE and TsaB. TsaD likely plays a direct catalytic role in this reaction. The polypeptide is tRNA N6-adenosine threonylcarbamoyltransferase (Aromatoleum aromaticum (strain DSM 19018 / LMG 30748 / EbN1) (Azoarcus sp. (strain EbN1))).